Reading from the N-terminus, the 654-residue chain is tRNA 5-methylaminomethyl-2-thiouridine biosynthesis bifunctional protein MnmC (654 aa).

The tract at residues 1 to 236 (MTDRIVPATL…KRAMLVGEFA (236 aa)) is tRNA (mnm(5)s(2)U34)-methyltransferase. An FAD-dependent cmnm(5)s(2)U34 oxidoreductase region spans residues 260–654 (IGAGLAGCAA…IRALRRGRVA (395 aa)).

The protein in the N-terminal section; belongs to the methyltransferase superfamily. tRNA (mnm(5)s(2)U34)-methyltransferase family. This sequence in the C-terminal section; belongs to the DAO family. Requires FAD as cofactor.

Its subcellular location is the cytoplasm. It carries out the reaction 5-aminomethyl-2-thiouridine(34) in tRNA + S-adenosyl-L-methionine = 5-methylaminomethyl-2-thiouridine(34) in tRNA + S-adenosyl-L-homocysteine + H(+). In terms of biological role, catalyzes the last two steps in the biosynthesis of 5-methylaminomethyl-2-thiouridine (mnm(5)s(2)U) at the wobble position (U34) in tRNA. Catalyzes the FAD-dependent demodification of cmnm(5)s(2)U34 to nm(5)s(2)U34, followed by the transfer of a methyl group from S-adenosyl-L-methionine to nm(5)s(2)U34, to form mnm(5)s(2)U34. The polypeptide is tRNA 5-methylaminomethyl-2-thiouridine biosynthesis bifunctional protein MnmC (Burkholderia thailandensis (strain ATCC 700388 / DSM 13276 / CCUG 48851 / CIP 106301 / E264)).